Reading from the N-terminus, the 132-residue chain is Small ribosomal subunit protein uS8 (132 aa).

The protein belongs to the universal ribosomal protein uS8 family. As to quaternary structure, part of the 30S ribosomal subunit. Contacts proteins S5 and S12.

Its function is as follows. One of the primary rRNA binding proteins, it binds directly to 16S rRNA central domain where it helps coordinate assembly of the platform of the 30S subunit. The sequence is that of Small ribosomal subunit protein uS8 from Halalkalibacterium halodurans (strain ATCC BAA-125 / DSM 18197 / FERM 7344 / JCM 9153 / C-125) (Bacillus halodurans).